Consider the following 328-residue polypeptide: 4-hydroxy-3-methylbut-2-enyl diphosphate reductase (328 aa).

Cys-24 is a [4Fe-4S] cluster binding site. Residues His-55 and His-88 each contribute to the (2E)-4-hydroxy-3-methylbut-2-enyl diphosphate site. Dimethylallyl diphosphate-binding residues include His-55 and His-88. Positions 55 and 88 each coordinate isopentenyl diphosphate. [4Fe-4S] cluster is bound at residue Cys-110. His-138 serves as a coordination point for (2E)-4-hydroxy-3-methylbut-2-enyl diphosphate. His-138 contacts dimethylallyl diphosphate. Position 138 (His-138) interacts with isopentenyl diphosphate. The active-site Proton donor is Glu-140. (2E)-4-hydroxy-3-methylbut-2-enyl diphosphate is bound at residue Thr-178. Cys-208 serves as a coordination point for [4Fe-4S] cluster. Ser-236, Ser-237, Asn-238, and Ser-279 together coordinate (2E)-4-hydroxy-3-methylbut-2-enyl diphosphate. Dimethylallyl diphosphate-binding residues include Ser-236, Ser-237, Asn-238, and Ser-279. Isopentenyl diphosphate-binding residues include Ser-236, Ser-237, Asn-238, and Ser-279.

Belongs to the IspH family. [4Fe-4S] cluster serves as cofactor.

It catalyses the reaction isopentenyl diphosphate + 2 oxidized [2Fe-2S]-[ferredoxin] + H2O = (2E)-4-hydroxy-3-methylbut-2-enyl diphosphate + 2 reduced [2Fe-2S]-[ferredoxin] + 2 H(+). The catalysed reaction is dimethylallyl diphosphate + 2 oxidized [2Fe-2S]-[ferredoxin] + H2O = (2E)-4-hydroxy-3-methylbut-2-enyl diphosphate + 2 reduced [2Fe-2S]-[ferredoxin] + 2 H(+). The protein operates within isoprenoid biosynthesis; dimethylallyl diphosphate biosynthesis; dimethylallyl diphosphate from (2E)-4-hydroxy-3-methylbutenyl diphosphate: step 1/1. Its pathway is isoprenoid biosynthesis; isopentenyl diphosphate biosynthesis via DXP pathway; isopentenyl diphosphate from 1-deoxy-D-xylulose 5-phosphate: step 6/6. In terms of biological role, catalyzes the conversion of 1-hydroxy-2-methyl-2-(E)-butenyl 4-diphosphate (HMBPP) into a mixture of isopentenyl diphosphate (IPP) and dimethylallyl diphosphate (DMAPP). Acts in the terminal step of the DOXP/MEP pathway for isoprenoid precursor biosynthesis. The polypeptide is 4-hydroxy-3-methylbut-2-enyl diphosphate reductase (Ehrlichia ruminantium (strain Gardel)).